We begin with the raw amino-acid sequence, 422 residues long: 26S proteasome non-ATPase regulatory subunit 11 (422 aa).

Residues 224 to 392 enclose the PCI domain; it reads DWKTAYSYFY…GVLIIFDEPP (169 aa).

Belongs to the proteasome subunit S9 family. Component of the 19S proteasome regulatory particle complex. The 26S proteasome consists of a 20S core particle (CP) and two 19S regulatory subunits (RP). The regulatory particle is made of a lid composed of 9 subunits including PSMD11, a base containing 6 ATPases and few additional components.

The protein resides in the nucleus. It localises to the cytoplasm. Its subcellular location is the cytosol. Functionally, component of the 26S proteasome, a multiprotein complex involved in the ATP-dependent degradation of ubiquitinated proteins. This complex plays a key role in the maintenance of protein homeostasis by removing misfolded or damaged proteins, which could impair cellular functions, and by removing proteins whose functions are no longer required. Therefore, the proteasome participates in numerous cellular processes, including cell cycle progression, apoptosis, or DNA damage repair. In the complex, PSMD11 is required for proteasome assembly. Plays a key role in increased proteasome activity in embryonic stem cells (ESCs): its high expression in ESCs promotes enhanced assembly of the 26S proteasome, followed by higher proteasome activity. The polypeptide is 26S proteasome non-ATPase regulatory subunit 11 (psmd11) (Xenopus tropicalis (Western clawed frog)).